Consider the following 188-residue polypeptide: PRA1 family protein 3 (188 aa).

Met-1 is modified (N-acetylmethionine). The Cytoplasmic segment spans residues 1-35; that stretch reads MDVNIAPLRAWDDFFPGSDRFAQPDFRDISKWNNR. A run of 2 helical transmembrane segments spans residues 36–56 and 57–77; these read VVSN…MMIS and VVGF…VLVF. The Cytoplasmic segment spans residues 78-93; it reads TGFVWAAHNKDALRRL. Transmembrane regions (helical) follow at residues 94–114 and 115–135; these read KKRY…FLIS and MFGG…LMFI. Positions 103–117 are required for homodimer formation and heterodimer formation with ARL6IP1; that stretch reads MVVMLASYFLISMFG. Residues 136-188 are Cytoplasmic-facing; sequence HASLRLRNLKNKLENKMEGIGLKRTPMGIVLDALEQQEEGINRLTDYISKVKE. Residues 136-188 are targeting to endoplasmic reticulum membrane; sequence HASLRLRNLKNKLENKMEGIGLKRTPMGIVLDALEQQEEGINRLTDYISKVKE.

The protein belongs to the PRA1 family. In terms of assembly, homodimer. Heterodimer with ARL6IP1. Forms multimers. Interacts with ARL6. Interacts with prenylated RAB1A and RAB3A. Interacts with SLC1A1/EAAC1. Interacts with RTN2 (via first transmembrane domain). Does not interact with VAMP1, VAMP2 or VAMP3.

The protein localises to the endoplasmic reticulum membrane. It localises to the cell membrane. Its subcellular location is the cytoplasm. The protein resides in the cytoskeleton. In terms of biological role, regulates intracellular concentrations of taurine and glutamate. Negatively modulates SLC1A1/EAAC1 glutamate transport activity by decreasing its affinity for glutamate in a PKC activity-dependent manner. Plays a role in the retention of SLC1A1/EAAC1 in the endoplasmic reticulum. This Macaca fascicularis (Crab-eating macaque) protein is PRA1 family protein 3 (ARL6IP5).